A 230-amino-acid chain; its full sequence is Thymine/uracil-DNA glycosylase (230 aa).

Positions 204, 211, 214, and 221 each coordinate [4Fe-4S] cluster.

This sequence belongs to the Nth/MutY family. [4Fe-4S] cluster serves as cofactor.

The enzyme catalyses Hydrolyzes mismatched double-stranded DNA and polynucleotides, releasing free thymine.. Its function is as follows. DNA glycosylase that excises thymine from T/G mismatches and uracil from U/G mismatches. Can also process T/GO and U/GO, but not A/G, T/C and U/C. Has weak AP lyase activity. The polypeptide is Thymine/uracil-DNA glycosylase (Pyrobaculum aerophilum (strain ATCC 51768 / DSM 7523 / JCM 9630 / CIP 104966 / NBRC 100827 / IM2)).